A 161-amino-acid polypeptide reads, in one-letter code: MSGHGAPDIDLTTLNPAETSQLRLAIVAASWHTQIMDGLLDGALRAAKDAGINEPTVIRVPGSFELPVAAARLAPHFDAVVALGVVIRGGTPHFEYVCQAATSGLTDVSVRTGVPVGFGVLTCDTEQQGLDRAGLPGSKEDKGHEAVTAALATAVVLKQYS.

5-amino-6-(D-ribitylamino)uracil is bound by residues W31, 63 to 65 (SFE), and 85 to 87 (VVI). Residue 90–91 (GT) participates in (2S)-2-hydroxy-3-oxobutyl phosphate binding. Catalysis depends on H93, which acts as the Proton donor. Position 118 (F118) interacts with 5-amino-6-(D-ribitylamino)uracil. Residue R132 participates in (2S)-2-hydroxy-3-oxobutyl phosphate binding.

Belongs to the DMRL synthase family.

It carries out the reaction (2S)-2-hydroxy-3-oxobutyl phosphate + 5-amino-6-(D-ribitylamino)uracil = 6,7-dimethyl-8-(1-D-ribityl)lumazine + phosphate + 2 H2O + H(+). It functions in the pathway cofactor biosynthesis; riboflavin biosynthesis; riboflavin from 2-hydroxy-3-oxobutyl phosphate and 5-amino-6-(D-ribitylamino)uracil: step 1/2. Its function is as follows. Catalyzes the formation of 6,7-dimethyl-8-ribityllumazine by condensation of 5-amino-6-(D-ribitylamino)uracil with 3,4-dihydroxy-2-butanone 4-phosphate. This is the penultimate step in the biosynthesis of riboflavin. The polypeptide is 6,7-dimethyl-8-ribityllumazine synthase (Pseudarthrobacter chlorophenolicus (strain ATCC 700700 / DSM 12829 / CIP 107037 / JCM 12360 / KCTC 9906 / NCIMB 13794 / A6) (Arthrobacter chlorophenolicus)).